The primary structure comprises 454 residues: tRNA modification GTPase MnmE (454 aa).

(6S)-5-formyl-5,6,7,8-tetrahydrofolate is bound by residues Arg23, Glu80, and Lys120. The TrmE-type G domain maps to 216–377 (GMKVVIAGRP…LRNHLKQSMG (162 aa)). Asn226 provides a ligand contact to K(+). GTP-binding positions include 226-231 (NAGKSS), 245-251 (TDIAGTT), 270-273 (DTAG), 335-338 (NKAD), and 358-360 (SAR). A Mg(2+)-binding site is contributed by Ser230. K(+)-binding residues include Thr245, Ile247, and Thr250. A Mg(2+)-binding site is contributed by Thr251. Residue Lys454 participates in (6S)-5-formyl-5,6,7,8-tetrahydrofolate binding.

The protein belongs to the TRAFAC class TrmE-Era-EngA-EngB-Septin-like GTPase superfamily. TrmE GTPase family. In terms of assembly, homodimer. Heterotetramer of two MnmE and two MnmG subunits. The cofactor is K(+).

It localises to the cytoplasm. In terms of biological role, exhibits a very high intrinsic GTPase hydrolysis rate. Involved in the addition of a carboxymethylaminomethyl (cmnm) group at the wobble position (U34) of certain tRNAs, forming tRNA-cmnm(5)s(2)U34. The sequence is that of tRNA modification GTPase MnmE from Salmonella paratyphi C (strain RKS4594).